We begin with the raw amino-acid sequence, 676 residues long: Pescadillo homolog (676 aa).

The disordered stretch occupies residues 277–296 (TIEGSNKQSNNSSNQEVSRD). Low complexity predominate over residues 281–291 (SNKQSNNSSNQ). The 117-residue stretch at 351-467 (EAGALFAPFT…KLLRPDLYAP (117 aa)) folds into the BRCT domain. Residues 471–676 (LPPHLSPWVK…RRKLEKTGEK (206 aa)) form a disordered region. The span at 494–519 (EQEEEGEAEMAGEEEEEESDEEMEEA) shows a compositional bias: acidic residues. Residues 520 to 531 (PETKKADAKADE) show a composition bias toward basic and acidic residues. 2 stretches are compositionally biased toward acidic residues: residues 532–541 (SESEDEDESV) and 548–581 (ADSDDDESESGQEEEDFGGFDDNEAASESEDEEE). Positions 571–676 (EAASESEDEE…RRKLEKTGEK (106 aa)) form a coiled coil. Over residues 582–592 (AARTQHQKELE) the composition is skewed to basic and acidic residues. A compositionally biased stretch (basic residues) spans 611–624 (KKKSSQAKKIAAKK). Positions 625–635 (RKEEEELERQK) are enriched in basic and acidic residues.

Belongs to the pescadillo family. Component of the NOP7 complex, composed of erb1, nop7 and ytm1. The complex is held together by erb1, which interacts with nop7 via its N-terminal domain and with ytm1 via a high-affinity interaction between the seven-bladed beta-propeller domains of the 2 proteins. The NOP7 complex associates with the 66S pre-ribosome.

It is found in the nucleus. It localises to the nucleolus. Its subcellular location is the nucleoplasm. Component of the NOP7 complex, which is required for maturation of the 25S and 5.8S ribosomal RNAs and formation of the 60S ribosome. In Aspergillus terreus (strain NIH 2624 / FGSC A1156), this protein is Pescadillo homolog (nop7).